Reading from the N-terminus, the 241-residue chain is ATP synthase subunit a (241 aa).

The next 5 membrane-spanning stretches (helical) occupy residues 30 to 50 (GQVF…VVIG), 91 to 111 (FIGT…LVPW), 128 to 148 (INTT…AGLS), 193 to 213 (LVVA…VMFL), and 214 to 234 (GLFT…YYIG).

The protein belongs to the ATPase A chain family. F-type ATPases have 2 components, CF(1) - the catalytic core - and CF(0) - the membrane proton channel. CF(1) has five subunits: alpha(3), beta(3), gamma(1), delta(1), epsilon(1). CF(0) has four main subunits: a, b, b' and c.

The protein localises to the cellular thylakoid membrane. Key component of the proton channel; it plays a direct role in the translocation of protons across the membrane. The protein is ATP synthase subunit a of Prochlorococcus marinus (strain NATL1A).